We begin with the raw amino-acid sequence, 156 residues long: Small ribosomal subunit protein uS7 (156 aa).

The protein belongs to the universal ribosomal protein uS7 family. As to quaternary structure, part of the 30S ribosomal subunit. Contacts proteins S9 and S11.

Its function is as follows. One of the primary rRNA binding proteins, it binds directly to 16S rRNA where it nucleates assembly of the head domain of the 30S subunit. Is located at the subunit interface close to the decoding center, probably blocks exit of the E-site tRNA. This is Small ribosomal subunit protein uS7 from Desulforamulus reducens (strain ATCC BAA-1160 / DSM 100696 / MI-1) (Desulfotomaculum reducens).